Consider the following 363-residue polypeptide: UDP-N-acetylglucosamine--N-acetylmuramyl-(pentapeptide) pyrophosphoryl-undecaprenol N-acetylglucosamine transferase (363 aa).

Residues 12 to 14 (TAG), R166, S196, and Q291 each bind UDP-N-acetyl-alpha-D-glucosamine.

It belongs to the glycosyltransferase 28 family. MurG subfamily.

It is found in the cell inner membrane. The enzyme catalyses di-trans,octa-cis-undecaprenyl diphospho-N-acetyl-alpha-D-muramoyl-L-alanyl-D-glutamyl-meso-2,6-diaminopimeloyl-D-alanyl-D-alanine + UDP-N-acetyl-alpha-D-glucosamine = di-trans,octa-cis-undecaprenyl diphospho-[N-acetyl-alpha-D-glucosaminyl-(1-&gt;4)]-N-acetyl-alpha-D-muramoyl-L-alanyl-D-glutamyl-meso-2,6-diaminopimeloyl-D-alanyl-D-alanine + UDP + H(+). It functions in the pathway cell wall biogenesis; peptidoglycan biosynthesis. Cell wall formation. Catalyzes the transfer of a GlcNAc subunit on undecaprenyl-pyrophosphoryl-MurNAc-pentapeptide (lipid intermediate I) to form undecaprenyl-pyrophosphoryl-MurNAc-(pentapeptide)GlcNAc (lipid intermediate II). This chain is UDP-N-acetylglucosamine--N-acetylmuramyl-(pentapeptide) pyrophosphoryl-undecaprenol N-acetylglucosamine transferase, found in Legionella pneumophila (strain Lens).